Here is a 400-residue protein sequence, read N- to C-terminus: Chalcone synthase 7 (400 aa).

Cysteine 168 is a catalytic residue.

Belongs to the thiolase-like superfamily. Chalcone/stilbene synthases family.

It carries out the reaction (E)-4-coumaroyl-CoA + 3 malonyl-CoA + 3 H(+) = 2',4,4',6'-tetrahydroxychalcone + 3 CO2 + 4 CoA. It functions in the pathway secondary metabolite biosynthesis; flavonoid biosynthesis. In terms of biological role, the primary product of this enzyme is 4,2',4',6'-tetrahydroxychalcone (also termed naringenin-chalcone or chalcone) which can under specific conditions spontaneously isomerize into naringenin. The sequence is that of Chalcone synthase 7 (CHS7) from Sorghum bicolor (Sorghum).